A 456-amino-acid chain; its full sequence is MDKLELVNDGLNIIDFIQKNQKEIQKTYGRSSIQQPSIKDQTKAWEDFLQCTSGESEQVEGGMSKDDGDVERRNLEDLSSTSPTDGTIGKRVSNTRDWAEGSDDIQLDPVVTDVVYHDHGGECTGYGFTSSPERGWSDYTSGANNGNVCLVSDAKMLSYAPEIAVSKEDRETDLVHLENKLSTTGLNPTAVPFTLRNLSDPAKDSPVIAEHYYGLGVKEQNVGPQTSRNVNLDSIKLYTSDDEEADQLEFEDEFAGSSSEVIVGISPEDEEPSSVGGKPNESIGRTIEGQSIRDNLQAKDNKSTDVPGAGPKDSAVKEEPPQKRLPMLAEEFECSGSEDPIIRELLKENSLINCQQGKDAQPPYHWSIERSISPDKTEIVNGAVQTADRQRPGTPMPKSRGIPIKKGHRREISICWDGKRAWVEEWCNPACSRITPLPRRQECQCGECPTECFHCG.

Positions 53 to 92 (SGESEQVEGGMSKDDGDVERRNLEDLSSTSPTDGTIGKRV) are disordered. Over residues 63–76 (MSKDDGDVERRNLE) the composition is skewed to basic and acidic residues. Position 257 is a phosphoserine; by host (Ser257). The tract at residues 265 to 324 (ISPEDEEPSSVGGKPNESIGRTIEGQSIRDNLQAKDNKSTDVPGAGPKDSAVKEEPPQKR) is disordered. Phosphoserine; by host is present on Ser350. Positions 408, 427, 431, 443, 445, 448, 452, and 455 each coordinate Zn(2+).

This sequence belongs to the paramyxoviruses V protein family. As to quaternary structure, interacts with host IFIH1/MDA5, DHX58/LGP2, STAT1 and STAT2. Interacts (via N-terminus) with host UBXN1 (via C-terminal UBX domain); this interaction inhibits interferon-alpha/beta (IFN-alpha/beta) production. Interacts with host RIGI regulatory protein (via CARDs domain) and host TRIM25 (via SPRY domain); these interactions prevent TRIM25-mediated ubiquitination of RIG-I and disrupts downstream RIG-I signaling.

Its subcellular location is the host cytoplasm. Functionally, plays an essential role in the inhibition of host immune response. Prevents the establishment of cellular antiviral state by blocking interferon-alpha/beta (IFN-alpha/beta) production and signaling pathway. Interacts with host IFIH1/MDA5 and DHX58/LGP2 to inhibit the transduction pathway involved in the activation of IFN-beta promoter, thus protecting the virus against cell antiviral state. Blocks the type I interferon signaling pathway by interacting with host STAT1 and STAT2 and thereby inhibiting their phosphorylation and subsequent nuclear translocation. Efficiently blocks the type II interferon signaling pathway. Suppresses interferon induction by interacting with and stabilizing host UBXN1, a negative regulator of both RIG-I-like receptors (RLR) and NF-kappa-B pathways. Blocks the type I interferon signaling pathway by disrupting the RIG-I signaling pathway. The polypeptide is Non-structural protein V (P/V/C) (Cynopterus brachyotis (Lesser short-nosed fruit bat)).